Consider the following 226-residue polypeptide: Biosynthetic peptidoglycan transglycosylase (226 aa).

Residues 10 to 30 (IIMTLLALLILPYLLIPVYAL) form a helical membrane-spanning segment.

This sequence belongs to the glycosyltransferase 51 family.

The protein localises to the cell inner membrane. It catalyses the reaction [GlcNAc-(1-&gt;4)-Mur2Ac(oyl-L-Ala-gamma-D-Glu-L-Lys-D-Ala-D-Ala)](n)-di-trans,octa-cis-undecaprenyl diphosphate + beta-D-GlcNAc-(1-&gt;4)-Mur2Ac(oyl-L-Ala-gamma-D-Glu-L-Lys-D-Ala-D-Ala)-di-trans,octa-cis-undecaprenyl diphosphate = [GlcNAc-(1-&gt;4)-Mur2Ac(oyl-L-Ala-gamma-D-Glu-L-Lys-D-Ala-D-Ala)](n+1)-di-trans,octa-cis-undecaprenyl diphosphate + di-trans,octa-cis-undecaprenyl diphosphate + H(+). The protein operates within cell wall biogenesis; peptidoglycan biosynthesis. Functionally, peptidoglycan polymerase that catalyzes glycan chain elongation from lipid-linked precursors. The polypeptide is Biosynthetic peptidoglycan transglycosylase (Agrobacterium fabrum (strain C58 / ATCC 33970) (Agrobacterium tumefaciens (strain C58))).